A 521-amino-acid chain; its full sequence is Bifunctional purine biosynthesis protein PurH (521 aa).

Positions 1–145 (MIKQALISVS…KNHRDVTVVV (145 aa)) constitute an MGS-like domain.

Belongs to the PurH family.

It catalyses the reaction (6R)-10-formyltetrahydrofolate + 5-amino-1-(5-phospho-beta-D-ribosyl)imidazole-4-carboxamide = 5-formamido-1-(5-phospho-D-ribosyl)imidazole-4-carboxamide + (6S)-5,6,7,8-tetrahydrofolate. It carries out the reaction IMP + H2O = 5-formamido-1-(5-phospho-D-ribosyl)imidazole-4-carboxamide. It participates in purine metabolism; IMP biosynthesis via de novo pathway; 5-formamido-1-(5-phospho-D-ribosyl)imidazole-4-carboxamide from 5-amino-1-(5-phospho-D-ribosyl)imidazole-4-carboxamide (10-formyl THF route): step 1/1. It functions in the pathway purine metabolism; IMP biosynthesis via de novo pathway; IMP from 5-formamido-1-(5-phospho-D-ribosyl)imidazole-4-carboxamide: step 1/1. The polypeptide is Bifunctional purine biosynthesis protein PurH (Burkholderia thailandensis (strain ATCC 700388 / DSM 13276 / CCUG 48851 / CIP 106301 / E264)).